A 352-amino-acid chain; its full sequence is Leukotriene B4 receptor 1 (352 aa).

Over methionine 1–leucine 19 the chain is Extracellular. An N-linked (GlcNAc...) asparagine glycan is attached at asparagine 2. Residues leucine 20–serine 42 form a helical membrane-spanning segment. The Cytoplasmic segment spans residues isoleucine 43–alanine 54. A helical transmembrane segment spans residues leucine 55–leucine 75. Topologically, residues histidine 76–arginine 91 are extracellular. Residues leucine 92–leucine 113 traverse the membrane as a helical segment. At aspartate 114 to leucine 138 the chain is on the cytoplasmic side. The helical transmembrane segment at alanine 139–valine 159 threads the bilayer. Residues proline 160 to arginine 178 are Extracellular-facing. N-linked (GlcNAc...) asparagine glycosylation is present at asparagine 164. Residues alanine 179 to alanine 199 form a helical membrane-spanning segment. Residues serine 200–arginine 221 lie on the Cytoplasmic side of the membrane. A helical membrane pass occupies residues leucine 222–leucine 242. Over alanine 243–asparagine 268 the chain is Extracellular. A helical transmembrane segment spans residues valine 269–glycine 289. Residues glycine 290–asparagine 352 lie on the Cytoplasmic side of the membrane. Composition is skewed to polar residues over residues serine 310–arginine 326 and glutamate 338–asparagine 352. Positions serine 310 to asparagine 352 are disordered.

It belongs to the G-protein coupled receptor 1 family. Post-translationally, phosphorylated by GRK6 upon leukotriene B4 binding; which promotes desensitization. In terms of tissue distribution, expressed at highest levels in heart, skeletal muscle and at lower levels in brain and liver. High level of expression in lymphoid tissues.

It is found in the cell membrane. Functionally, receptor for extracellular ATP &gt; UTP and ADP. The activity of this receptor is mediated by G proteins which activate a phosphatidylinositol-calcium second messenger system. May be the cardiac P2Y receptor involved in the regulation of cardiac muscle contraction through modulation of L-type calcium currents. Is a receptor for leukotriene B4, a potent chemoattractant involved in inflammation and immune response. The sequence is that of Leukotriene B4 receptor 1 (LTB4R) from Homo sapiens (Human).